A 395-amino-acid polypeptide reads, in one-letter code: MLRRLLERPCTLALLVGSQLAVMMYLSLGGFRSLSALFGRDPGPTFDYSHPHDVYSNLSHLPGAPGAAGAPLAQVLPDCPERSPFLVGPVSVSFSPVPSLAEIVERNPRVESGGRYRPAGCEPRSRTAIIVPHRAREHHLRLLLYHLHPFLQRQQLAYGIYVIHQAGNGTFNRAKLLNVGVREALRDEEWDCLFLHDVDLLPENDHNLYVCDPRGPRHVAVAMNKFGYSLPYPQYFGGVSALTPDQYLKMNGFPNEYWGWGGEDDDIATRVRLAGMKISRPPTSVGHYKMVKHRGDKGNEENPHRFDLLVRTQNSWTQDGMNSLTYRLLARELGPLYTNITADIGTDPRGPRAPSGPRYPPGSSQAFRQEMLQRRPPARPGPLPTANHTAPHGSH.

Over 1 to 10 (MLRRLLERPC) the chain is Cytoplasmic. The helical; Signal-anchor for type II membrane protein transmembrane segment at 11 to 31 (TLALLVGSQLAVMMYLSLGGF) threads the bilayer. Residues 32-395 (RSLSALFGRD…ANHTAPHGSH (364 aa)) are Lumenal-facing. An N-linked (GlcNAc...) asparagine glycan is attached at Asn-57. Residues Cys-79 and Cys-121 are joined by a disulfide bond. 132-136 (PHRAR) is a binding site for UDP-alpha-D-galactose. Residue Asn-168 is glycosylated (N-linked (GlcNAc...) asparagine). Residues 171 to 173 (FNR), 198 to 199 (VD), Tyr-228, and Trp-260 contribute to the UDP-alpha-D-galactose site. Cys-192 and Cys-211 are disulfide-bonded. Residue Asp-199 participates in Mn(2+) binding. 262 to 265 (GEDD) provides a ligand contact to N-acetyl-D-glucosamine. Position 293 (His-293) interacts with Mn(2+). Residue 293–295 (HRG) coordinates UDP-alpha-D-galactose. Arg-305 is an N-acetyl-D-glucosamine binding site. N-linked (GlcNAc...) asparagine glycans are attached at residues Asn-339 and Asn-387. Residues 341–395 (TADIGTDPRGPRAPSGPRYPPGSSQAFRQEMLQRRPPARPGPLPTANHTAPHGSH) form a disordered region.

Belongs to the glycosyltransferase 7 family. Mn(2+) is required as a cofactor.

Its subcellular location is the golgi apparatus. The protein localises to the golgi stack membrane. It catalyses the reaction an N-acetyl-beta-D-glucosaminyl derivative + UDP-alpha-D-galactose = a beta-D-galactosyl-(1-&gt;4)-N-acetyl-beta-D-glucosaminyl derivative + UDP + H(+). The catalysed reaction is N-acetyl-D-glucosamine + UDP-alpha-D-galactose = beta-D-galactosyl-(1-&gt;4)-N-acetyl-D-glucosamine + UDP + H(+). The enzyme catalyses a beta-D-GlcNAc-(1-&gt;3)-beta-D-Gal-(1-&gt;4)-beta-D-Glc-(1&lt;-&gt;1)-Cer(d18:1(4E)) + UDP-alpha-D-galactose = a neolactoside nLc4Cer(d18:1(4E)) + UDP + H(+). It carries out the reaction a beta-D-glucosylceramide + UDP-alpha-D-galactose = a beta-D-galactosyl-(1-&gt;4)-beta-D-glucosyl-(1&lt;-&gt;1)-ceramide + UDP + H(+). It catalyses the reaction a neolactoside IV(3)-beta-GlcNAc-nLc4Cer + UDP-alpha-D-galactose = a neolactoside nLc6Cer + UDP + H(+). It participates in protein modification; protein glycosylation. Functionally, responsible for the synthesis of complex-type N-linked oligosaccharides in many glycoproteins as well as the carbohydrate moieties of glycolipids. The polypeptide is Beta-1,4-galactosyltransferase 3 (Rattus norvegicus (Rat)).